A 690-amino-acid chain; its full sequence is Calpain-9 (690 aa).

Residues 1–23 are disordered; the sequence is MPYLHRSLRPQPQPVPGDARTIH. The 296-residue stretch at 42–337 folds into the Calpain catalytic domain; the sequence is LFEDADFPAS…FDKVEICNLT (296 aa). Ca(2+)-binding residues include Leu81, Gly83, and Asp88. Cys97 is a catalytic residue. Glu167 contributes to the Ca(2+) binding site. Catalysis depends on residues His254 and Asn278. Glu284, Asp291, Leu312, Asp314, and Glu316 together coordinate Ca(2+). The interval 338-521 is domain III; that stretch reads PDALEDSALH…PQEEETEEEQ (184 aa). EF-hand domains follow at residues 518–552, 561–589, and 591–626; these read EEEQ…VLQK, LSLL…FRVF, and DKLK…AGFQ. The interval 522 to 690 is domain IV; it reads QFRALFQRVA…NEFISLTMNI (169 aa). Positions 574, 576, 578, 580, 585, 604, 606, 608, 610, and 615 each coordinate Ca(2+).

The protein belongs to the peptidase C2 family. In terms of tissue distribution, predominantly expressed in stomach and small intestine, although low levels of expression in other organs.

It is found in the cytoplasm. In terms of biological role, calcium-regulated non-lysosomal thiol-protease. This is Calpain-9 (Capn9) from Mus musculus (Mouse).